The following is a 62-amino-acid chain: Large ribosomal subunit protein bL28 (62 aa).

A disordered region spans residues 1–24; the sequence is MGKQCFVTGRKASTGNNRSHALNS. Residues 11–24 show a composition bias toward polar residues; sequence KASTGNNRSHALNS.

Belongs to the bacterial ribosomal protein bL28 family.

The polypeptide is Large ribosomal subunit protein bL28 (Staphylococcus saprophyticus subsp. saprophyticus (strain ATCC 15305 / DSM 20229 / NCIMB 8711 / NCTC 7292 / S-41)).